The following is a 327-amino-acid chain: Tetraacyldisaccharide 4'-kinase (327 aa).

52–59 serves as a coordination point for ATP; sequence TLGGAGKT.

Belongs to the LpxK family.

It carries out the reaction a lipid A disaccharide + ATP = a lipid IVA + ADP + H(+). It functions in the pathway glycolipid biosynthesis; lipid IV(A) biosynthesis; lipid IV(A) from (3R)-3-hydroxytetradecanoyl-[acyl-carrier-protein] and UDP-N-acetyl-alpha-D-glucosamine: step 6/6. Functionally, transfers the gamma-phosphate of ATP to the 4'-position of a tetraacyldisaccharide 1-phosphate intermediate (termed DS-1-P) to form tetraacyldisaccharide 1,4'-bis-phosphate (lipid IVA). The polypeptide is Tetraacyldisaccharide 4'-kinase (Methylorubrum extorquens (strain CM4 / NCIMB 13688) (Methylobacterium extorquens)).